A 466-amino-acid polypeptide reads, in one-letter code: MDFNKENINMVDAKKAKKTVVATGIGNAMEWFDFGVYAYTTAYIGANFFSPVENADIRQMLTFAALAIAFLLRPIGGVVFGIIGDKYGRKVVLTSTIILMAFSTLTIGLLPSYDQIGLWAPILLLLARVLQGFSTGGEYAGAMTYVAESSPDKRRNSLGSGLEIGTLSGYIAASIMIAVLTFFLTDEQMASFGWRIPFLLGLFLGLFGLYLRRKLEESPVFENDVATQPERDNINFLQIIRFYYKDIFVCFVAVVFFNVTNYMVTAYLPTYLEQVIKLDATTTSVLITCVMAIMIPLALMFGKLADKIGEKKVFLIGTGGLTLFSIIAFMLLHSQSFVVIVIGIFILGFFLSTYEATMPGSLPTMFYSHIRYRTLSVTFNISVSIFGGTTPLVATWLVTKTGDPLAPAYYLTAISVIGFLVITFLHLSTAGKSLKGSYPNVDNEQDRAYYAEHPKEALWWVKERKN.

12 consecutive transmembrane segments (helical) span residues 20 to 42, 63 to 83, 91 to 111, 116 to 136, 164 to 184, 191 to 211, 247 to 267, 285 to 305, 313 to 332, 337 to 354, 377 to 397, and 405 to 425; these read VVAT…YTTA, FAAL…FGII, VVLT…GLLP, IGLW…FSTG, IGTL…TFFL, SFGW…GLYL, IFVC…VTAY, VLIT…GKLA, VFLI…FMLL, FVVI…LSTY, VTFN…ATWL, and LAPA…ITFL.

This sequence belongs to the major facilitator superfamily. Metabolite:H+ Symporter (MHS) family (TC 2.A.1.6) family.

The protein resides in the cell membrane. May be a proton symporter involved in the uptake of osmolytes such as proline and glycine betaine. The polypeptide is Putative proline/betaine transporter (proP) (Staphylococcus aureus (strain Mu3 / ATCC 700698)).